The following is a 66-amino-acid chain: Large ribosomal subunit protein bL35 (66 aa).

This sequence belongs to the bacterial ribosomal protein bL35 family.

The protein is Large ribosomal subunit protein bL35 of Brucella canis (strain ATCC 23365 / NCTC 10854 / RM-666).